Consider the following 149-residue polypeptide: Large ribosomal subunit protein bL9 (149 aa).

This sequence belongs to the bacterial ribosomal protein bL9 family.

Binds to the 23S rRNA. This Geobacillus kaustophilus (strain HTA426) protein is Large ribosomal subunit protein bL9.